The sequence spans 655 residues: ATP-dependent zinc metalloprotease FtsH (655 aa).

Residues 1–17 (MPIETEPNRTRKNFEPK) lie on the Cytoplasmic side of the membrane. The helical transmembrane segment at 18–38 (RFGGSLFILFTLLLFLNLFVL) threads the bilayer. Residues 39–124 (RGPRFPITAY…APPPSSLSWL (86 aa)) are Lumenal-facing. A helical membrane pass occupies residues 125 to 145 (PTLLGWVVPPLIFFGIWSWLI). Residues 146–655 (NRNQGAGPAA…LNSHQLIGIN (510 aa)) lie on the Cytoplasmic side of the membrane. Residue 216 to 223 (GPPGTGKT) participates in ATP binding. His440 serves as a coordination point for Zn(2+). Residue Glu441 is part of the active site. Zn(2+)-binding residues include His444 and Asp517.

This sequence in the central section; belongs to the AAA ATPase family. In the C-terminal section; belongs to the peptidase M41 family. Homohexamer. It depends on Zn(2+) as a cofactor.

The protein localises to the cellular thylakoid membrane. Its function is as follows. Acts as a processive, ATP-dependent zinc metallopeptidase for both cytoplasmic and membrane proteins. Plays a role in the quality control of integral membrane proteins. The protein is ATP-dependent zinc metalloprotease FtsH of Acaryochloris marina (strain MBIC 11017).